Reading from the N-terminus, the 289-residue chain is Acetyl-coenzyme A carboxylase carboxyl transferase subunit beta (289 aa).

The CoA carboxyltransferase N-terminal domain occupies 34–289 (MWVKCNKCGD…KLINMHQNSF (256 aa)). Positions 38, 41, 57, and 60 each coordinate Zn(2+). Residues 38 to 60 (CNKCGDILYQNDLEKNYMVCNLC) form a C4-type zinc finger.

Belongs to the AccD/PCCB family. In terms of assembly, acetyl-CoA carboxylase is a heterohexamer composed of biotin carboxyl carrier protein (AccB), biotin carboxylase (AccC) and two subunits each of ACCase subunit alpha (AccA) and ACCase subunit beta (AccD). Zn(2+) serves as cofactor.

The protein localises to the cytoplasm. It carries out the reaction N(6)-carboxybiotinyl-L-lysyl-[protein] + acetyl-CoA = N(6)-biotinyl-L-lysyl-[protein] + malonyl-CoA. It functions in the pathway lipid metabolism; malonyl-CoA biosynthesis; malonyl-CoA from acetyl-CoA: step 1/1. In terms of biological role, component of the acetyl coenzyme A carboxylase (ACC) complex. Biotin carboxylase (BC) catalyzes the carboxylation of biotin on its carrier protein (BCCP) and then the CO(2) group is transferred by the transcarboxylase to acetyl-CoA to form malonyl-CoA. This chain is Acetyl-coenzyme A carboxylase carboxyl transferase subunit beta, found in Clostridium botulinum (strain Langeland / NCTC 10281 / Type F).